The chain runs to 177 residues: MTKEYATLAGGCFWCMVKPFTSYPGIKSVVSGYSGGHVDNPTYEQVCTNQTGHVEAVQITFDPEVTSFENILDIYFKTFDPTDDQGQFFDRGESYQPVIFYHDEHQKKAAEFKKQQLNEQGIFKKPVITPIKPYKNFYPAEDYHQDYYKKNPVHYYQYQRGSGRKAFIESHWGNQNA.

Residue Cys-12 is part of the active site.

The protein belongs to the MsrA Met sulfoxide reductase family.

It catalyses the reaction L-methionyl-[protein] + [thioredoxin]-disulfide + H2O = L-methionyl-(S)-S-oxide-[protein] + [thioredoxin]-dithiol. The catalysed reaction is [thioredoxin]-disulfide + L-methionine + H2O = L-methionine (S)-S-oxide + [thioredoxin]-dithiol. In terms of biological role, has an important function as a repair enzyme for proteins that have been inactivated by oxidation. Catalyzes the reversible oxidation-reduction of methionine sulfoxide in proteins to methionine. This Staphylococcus aureus (strain NCTC 8325 / PS 47) protein is Peptide methionine sulfoxide reductase MsrA 2 (msrA2).